The chain runs to 294 residues: DNA adenine methyltransferase YhdJ (294 aa).

The disordered stretch occupies residues Thr275–Lys294. The span at Arg283–Lys294 shows a compositional bias: basic and acidic residues.

The protein belongs to the N(4)/N(6)-methyltransferase family.

It carries out the reaction a 2'-deoxyadenosine in DNA + S-adenosyl-L-methionine = an N(6)-methyl-2'-deoxyadenosine in DNA + S-adenosyl-L-homocysteine + H(+). Functionally, a beta subtype methylase, recognizes the double-stranded sequence 5'-ATGCAT-3' and methylates A-5. This Escherichia coli (strain K12) protein is DNA adenine methyltransferase YhdJ (yhdJ).